The following is a 350-amino-acid chain: Cytosolic sulfotransferase 18 (350 aa).

M1 carries the N-acetylmethionine modification. Low complexity predominate over residues 1-17 (MESETLTAKATITTTTL). A disordered region spans residues 1–28 (MESETLTAKATITTTTLPSHDETKTEST). The segment covering 19 to 28 (SHDETKTEST) has biased composition (basic and acidic residues). 93–98 (KTGTTW) is a 3'-phosphoadenylyl sulfate binding site. The active-site Proton acceptor is the H155. 3'-phosphoadenylyl sulfate contacts are provided by residues R177, S185, Y243, and 313-315 (RKG).

This sequence belongs to the sulfotransferase 1 family. Expressed in roots, leaves and stems. Barely detected in siliques and flowers.

It localises to the cytoplasm. It catalyses the reaction an aliphatic (Z)-desulfo-glucosinolate + 3'-phosphoadenylyl sulfate = a (Z)-omega-(methylsulfanyl)-N-sulfo-alkylhydroximate S-glucoside + adenosine 3',5'-bisphosphate + H(+). Inhibited by phosphoadenosine 5'-phosphate (PAP). Sulfotransferase that utilizes 3'-phospho-5'-adenylyl sulfate (PAPS) as sulfonate donor to catalyze the sulfate conjugation of desulfo-glucosinolates (dsGSs), the final step in the biosynthesis of the glucosinolate core structure. Preferred substrate are the long-chain desulfo-glucosinolates, 7-methylthioheptyl and 8-methylthiooctyl, derived from methionine. Substrate preference is desulfo-benzyl glucosinolate &gt; desulfo-4-methylthiobutyl glucosinolate &gt; desulfo-6-methylthiohexyl glucosinolate &gt; desulfo-3-methylthiopropyl glucosinolate &gt; desulfo-indol-3-yl methyl glucosinolate &gt; desulfo-singrin &gt; desulfo-3-butenyl glucosinolate. This chain is Cytosolic sulfotransferase 18 (SOT18), found in Arabidopsis thaliana (Mouse-ear cress).